Reading from the N-terminus, the 420-residue chain is Ammonium transporter Amt2 (420 aa).

11 helical membrane-spanning segments follow: residues 34-54, 71-91, 120-140, 149-169, 180-200, 220-240, 250-270, 273-293, 295-315, 339-359, and 365-385; these read VFFL…FAML, NMVD…ILCS, SWFF…GGVA, VLIS…LGPW, AGSL…IAAL, IPMA…FNVG, GLVC…ALIA, NDVL…CSGT, VVSP…VPIV, VIGA…AGGV, and IIGA…LAKI.

The protein belongs to the ammonia transporter channel (TC 1.A.11.2) family. Homotrimer. Interacts and forms a complex with GlnK2.

It localises to the cell membrane. Its function is as follows. Involved in the uptake of ammonium/ammonia (NH(4)(+)/NH(3)). Transport is electrogenic. The chain is Ammonium transporter Amt2 from Methanocaldococcus jannaschii (strain ATCC 43067 / DSM 2661 / JAL-1 / JCM 10045 / NBRC 100440) (Methanococcus jannaschii).